The primary structure comprises 164 residues: Phosphopantetheine adenylyltransferase (164 aa).

Residue T10 coordinates substrate. ATP is bound by residues 10 to 11 and H18; that span reads TF. Residues K42, L74, and R88 each coordinate substrate. ATP contacts are provided by residues 89-91, E99, and 124-130; these read GIR and YAFVSST.

It belongs to the bacterial CoaD family. As to quaternary structure, homohexamer. Requires Mg(2+) as cofactor.

It localises to the cytoplasm. The catalysed reaction is (R)-4'-phosphopantetheine + ATP + H(+) = 3'-dephospho-CoA + diphosphate. It participates in cofactor biosynthesis; coenzyme A biosynthesis; CoA from (R)-pantothenate: step 4/5. In terms of biological role, reversibly transfers an adenylyl group from ATP to 4'-phosphopantetheine, yielding dephospho-CoA (dPCoA) and pyrophosphate. This is Phosphopantetheine adenylyltransferase from Tolumonas auensis (strain DSM 9187 / NBRC 110442 / TA 4).